Reading from the N-terminus, the 2711-residue chain is Chromodomain-helicase-DNA-binding protein 6 (2711 aa).

4 stretches are compositionally biased toward basic and acidic residues: residues 1-12 (MKMKIQKKEKQL), 100-115 (EPGEQEGTKGSKDREP), 122-151 (EPKEPKEPRRAKEPKRAKEPKETKQKDGVK), and 158-171 (EASGTKEGKEKRSC). Disordered stretches follow at residues 1-52 (MKMK…EEAA) and 66-243 (EEAD…QVKR). Positions 1–746 (MKMKIQKKEK…MMELRKCCNH (746 aa)) are required for DNA-dependent ATPase activity. The segment covering 214 to 224 (SLPNPSLQSPE) has biased composition (low complexity). Chromo domains are found at residues 291–342 (NIIE…KDPR) and 374–438 (IEID…KHVE). One can recognise a Helicase ATP-binding domain in the interval 472–646 (LFNWYNRKNC…FSLLNFLEPS (175 aa)). Residue 485 to 492 (DEMGLGKT) coordinates ATP. The DEAH box motif lies at 597 to 600 (DEAH). The region spanning 786-955 (LIDKLLPKLI…LSKMEVEDLL (170 aa)) is the Helicase C-terminal domain. The disordered stretch occupies residues 1318-1389 (SLSAEQGVTD…SDPDKSPWPV (72 aa)). Over residues 1320 to 1329 (SAEQGVTDGT) the composition is skewed to polar residues. Residues 1332–1350 (IPERGNIDKEDSAEDKLDG) are compositionally biased toward basic and acidic residues. A Myb-like domain is found at 1448-1502 (RWTRREQADFYRTVSSFGVVYDQEKKAFDWTQFRIISRLDKKSDESLEHYFYSFV). Position 1865 is a phosphoserine (Ser-1865). Disordered regions lie at residues 1951–1978 (SEDSEVEKPKAYQPDLYRSKANNSTVEG), 1997–2059 (EPWK…ASGI), 2124–2147 (LPTPVLSSSAGSRSSLSEPEATEH), 2321–2350 (TTLSTTHPEVPGATSSAPEPTAAASSQAEK), 2373–2419 (GFGT…RGFL), 2550–2602 (SASL…ITTS), and 2641–2711 (RHSE…EDTN). Over residues 2017-2036 (SEPKPEDMDFENKDDYEKDG) the composition is skewed to basic and acidic residues. Low complexity-rich tracts occupy residues 2130-2140 (SSSAGSRSSLS) and 2333-2349 (ATSSAPEPTAAASSQAE). The span at 2550–2563 (SASLASTKSGTSAT) shows a compositional bias: low complexity. The segment covering 2565–2586 (KSTEDKLSGHDVNTDALVDDKP) has biased composition (basic and acidic residues). Polar residues-rich tracts occupy residues 2591-2602 (FSDQSEPTITTS) and 2677-2688 (SDQNCTESSATV). Basic and acidic residues predominate over residues 2690-2711 (PEREHVAQAREEGLKDSNEDTN).

It belongs to the SNF2/RAD54 helicase family. Interacts with NFE2L2; involved in activation of the transcription. As to expression, widely expressed.

Its subcellular location is the nucleus. It localises to the nucleoplasm. It catalyses the reaction ATP + H2O = ADP + phosphate + H(+). Its function is as follows. ATP-dependent chromatin-remodeling factor. Regulates transcription by disrupting nucleosomes in a largely non-sliding manner which strongly increases the accessibility of chromatin. Activates transcription of specific genes in response to oxidative stress through interaction with NFE2L2. The sequence is that of Chromodomain-helicase-DNA-binding protein 6 (Chd6) from Mus musculus (Mouse).